A 336-amino-acid chain; its full sequence is Tetraacyldisaccharide 4'-kinase (336 aa).

ATP is bound at residue 60 to 67; the sequence is TVGGTGKT.

The protein belongs to the LpxK family.

The catalysed reaction is a lipid A disaccharide + ATP = a lipid IVA + ADP + H(+). It functions in the pathway glycolipid biosynthesis; lipid IV(A) biosynthesis; lipid IV(A) from (3R)-3-hydroxytetradecanoyl-[acyl-carrier-protein] and UDP-N-acetyl-alpha-D-glucosamine: step 6/6. In terms of biological role, transfers the gamma-phosphate of ATP to the 4'-position of a tetraacyldisaccharide 1-phosphate intermediate (termed DS-1-P) to form tetraacyldisaccharide 1,4'-bis-phosphate (lipid IVA). This Pseudomonas fluorescens (strain ATCC BAA-477 / NRRL B-23932 / Pf-5) protein is Tetraacyldisaccharide 4'-kinase.